The chain runs to 270 residues: 4-hydroxy-tetrahydrodipicolinate reductase (270 aa).

Residues 11–16 and Glu-37 contribute to the NAD(+) site; that span reads GCNGRM. Arg-38 is an NADP(+) binding site. NAD(+)-binding positions include 101–103 and 125–128; these read GTT and ASNY. His-158 functions as the Proton donor/acceptor in the catalytic mechanism. His-159 lines the (S)-2,3,4,5-tetrahydrodipicolinate pocket. Residue Lys-162 is the Proton donor of the active site. Residue 168–169 participates in (S)-2,3,4,5-tetrahydrodipicolinate binding; it reads GT.

The protein belongs to the DapB family.

Its subcellular location is the cytoplasm. The enzyme catalyses (S)-2,3,4,5-tetrahydrodipicolinate + NAD(+) + H2O = (2S,4S)-4-hydroxy-2,3,4,5-tetrahydrodipicolinate + NADH + H(+). It carries out the reaction (S)-2,3,4,5-tetrahydrodipicolinate + NADP(+) + H2O = (2S,4S)-4-hydroxy-2,3,4,5-tetrahydrodipicolinate + NADPH + H(+). It participates in amino-acid biosynthesis; L-lysine biosynthesis via DAP pathway; (S)-tetrahydrodipicolinate from L-aspartate: step 4/4. Its function is as follows. Catalyzes the conversion of 4-hydroxy-tetrahydrodipicolinate (HTPA) to tetrahydrodipicolinate. This is 4-hydroxy-tetrahydrodipicolinate reductase from Aeromonas salmonicida (strain A449).